Reading from the N-terminus, the 368-residue chain is Histidinol-phosphate aminotransferase (368 aa).

At Lys-223 the chain carries N6-(pyridoxal phosphate)lysine.

This sequence belongs to the class-II pyridoxal-phosphate-dependent aminotransferase family. Histidinol-phosphate aminotransferase subfamily. As to quaternary structure, homodimer. The cofactor is pyridoxal 5'-phosphate.

The enzyme catalyses L-histidinol phosphate + 2-oxoglutarate = 3-(imidazol-4-yl)-2-oxopropyl phosphate + L-glutamate. The protein operates within amino-acid biosynthesis; L-histidine biosynthesis; L-histidine from 5-phospho-alpha-D-ribose 1-diphosphate: step 7/9. This chain is Histidinol-phosphate aminotransferase, found in Rhodospirillum rubrum (strain ATCC 11170 / ATH 1.1.1 / DSM 467 / LMG 4362 / NCIMB 8255 / S1).